The chain runs to 294 residues: ATP synthase gamma chain (294 aa).

The protein belongs to the ATPase gamma chain family. As to quaternary structure, F-type ATPases have 2 components, CF(1) - the catalytic core - and CF(0) - the membrane proton channel. CF(1) has five subunits: alpha(3), beta(3), gamma(1), delta(1), epsilon(1). CF(0) has three main subunits: a, b and c.

It localises to the cell inner membrane. Produces ATP from ADP in the presence of a proton gradient across the membrane. The gamma chain is believed to be important in regulating ATPase activity and the flow of protons through the CF(0) complex. This Campylobacter lari (strain RM2100 / D67 / ATCC BAA-1060) protein is ATP synthase gamma chain.